The primary structure comprises 170 residues: Transmembrane protein 252 (170 aa).

Transmembrane regions (helical) follow at residues 8–28 (ILCA…AFFI) and 40–60 (LIAA…GIFW). Residues 112–147 (CPAEREASGIPPPLYTETGLEFQDGNDSHPEAPPSY) are disordered.

The protein resides in the membrane. In Homo sapiens (Human), this protein is Transmembrane protein 252 (TMEM252).